We begin with the raw amino-acid sequence, 252 residues long: Mediator of RNA polymerase II transcription subunit 4 (252 aa).

The stretch at lysine 70–glutamate 112 forms a coiled coil. The segment at histidine 218–aspartate 252 is disordered. Residues serine 241–aspartate 252 are compositionally biased toward low complexity.

It belongs to the Mediator complex subunit 4 family. In terms of assembly, component of the Mediator complex.

Its subcellular location is the nucleus. Its function is as follows. Component of the Mediator complex, a coactivator involved in the regulated transcription of nearly all RNA polymerase II-dependent genes. Mediator functions as a bridge to convey information from gene-specific regulatory proteins to the basal RNA polymerase II transcription machinery. Mediator is recruited to promoters by direct interactions with regulatory proteins and serves as a scaffold for the assembly of a functional preinitiation complex with RNA polymerase II and the general transcription factors. The polypeptide is Mediator of RNA polymerase II transcription subunit 4 (med4) (Xenopus tropicalis (Western clawed frog)).